We begin with the raw amino-acid sequence, 368 residues long: MSESPKKVIVGMSGGVDSSVSAWLLQQQGYQVEGLFMKNWEEDDGEEYCTAAADLADAQAVCDKLGIELHTVNFAAEYWDNVFELFLEEYKAGRTPNPDILCNKEIKFKAFLEFAAEDLGADYIATGHYVRRVDINGKSRLLRGLDGNKDQSYFLYTLGHEQIAQSLFPVGELEKPQVRKIAEDLGLITAKKKDSTGICFIGERKFRDFLGRYLPAQPGKIITVDGDEIGEHQGLMYHTLGQRKGLGIGGTKDGSEDPWYVVDKDVENNVLIVAQGHEHPRLMSSGLIAQQLHWVDREPFTGTLSCTVKTRYRQTDIPCTINALDDDRIEVIFDEPVAAVTPGQSAVFYSGEVCLGGGIIEQRLPLTV.

ATP contacts are provided by residues 11-18 and Met-37; that span reads GMSGGVDS. Residues 97-99 are interaction with target base in tRNA; sequence NPD. The active-site Nucleophile is Cys-102. A disulfide bridge links Cys-102 with Cys-199. Position 127 (Gly-127) interacts with ATP. Residues 149–151 form an interaction with tRNA region; sequence KDQ. The active-site Cysteine persulfide intermediate is the Cys-199. Residues 311-312 are interaction with tRNA; the sequence is RY.

It belongs to the MnmA/TRMU family. As to quaternary structure, interacts with TusE.

The protein localises to the cytoplasm. It catalyses the reaction S-sulfanyl-L-cysteinyl-[protein] + uridine(34) in tRNA + AH2 + ATP = 2-thiouridine(34) in tRNA + L-cysteinyl-[protein] + A + AMP + diphosphate + H(+). Functionally, catalyzes the 2-thiolation of uridine at the wobble position (U34) of tRNA(Lys), tRNA(Glu) and tRNA(Gln), leading to the formation of s(2)U34, the first step of tRNA-mnm(5)s(2)U34 synthesis. Sulfur is provided by IscS, via a sulfur-relay system. Binds ATP and its substrate tRNAs. This is tRNA-specific 2-thiouridylase MnmA from Salmonella arizonae (strain ATCC BAA-731 / CDC346-86 / RSK2980).